Reading from the N-terminus, the 224-residue chain is CMRF35-like molecule 6 (224 aa).

Residues Met1–Pro20 form the signal peptide. Residues Gly21–Arg183 lie on the Extracellular side of the membrane. Residues Tyr22–Ser130 enclose the Ig-like V-type domain. 2 cysteine pairs are disulfide-bonded: Cys43-Cys110 and Cys57-Cys65. 2 N-linked (GlcNAc...) asparagine glycosylation sites follow: Asn90 and Asn99. The span at Thr136 to Pro151 shows a compositional bias: polar residues. Residues Thr136 to His174 are disordered. Residues Phe184–Trp204 traverse the membrane as a helical segment. Residues Val205 to Gln224 are Cytoplasmic-facing.

This sequence belongs to the CD300 family. As to expression, present on the surface of monocytes, neutrophils, a proportion of peripheral blood T- and B-lymphocytes and lymphocytic cell lines.

The protein localises to the cell membrane. This Homo sapiens (Human) protein is CMRF35-like molecule 6 (CD300C).